The primary structure comprises 51 residues: Protein SspM (51 aa).

This sequence belongs to the alpha/beta-type SASP family.

In Mycolicibacterium phlei (Mycobacterium phlei), this protein is Protein SspM (sspM).